We begin with the raw amino-acid sequence, 511 residues long: Lysine--tRNA ligase (511 aa).

Positions 403 and 410 each coordinate Mg(2+).

This sequence belongs to the class-II aminoacyl-tRNA synthetase family. Homodimer. It depends on Mg(2+) as a cofactor.

The protein resides in the cytoplasm. The enzyme catalyses tRNA(Lys) + L-lysine + ATP = L-lysyl-tRNA(Lys) + AMP + diphosphate. This Onion yellows phytoplasma (strain OY-M) protein is Lysine--tRNA ligase.